The primary structure comprises 602 residues: MDHIRNFSIIAHIDHGKSTLADRIIQRCGGLSDREMEAQVLDSMDIERERGITIKAQTAALQYKARDGQVYNLNLIDTPGHVDFSYEVSRSLSACEGALLVVDASQGVEAQTVANCYTALDLGVTVVPVLNKMDLPNADPDNAKAEIEDVIGIDADDAIPCSAKTGMGIDEILEAVIARMPPPKGNPDGPPRAMIVDSWFDNYVGVVMLVRVVDGTLGKGERIRMMATNSVYPIEHLGVFTPKSENREALKAGEVGFIICGIKELQAAKVGDTVTLEKKLPNNAGPAAEALPGFKEIQPQVFAGLYPTEASEYDQLRDALEKLKLNDSSLRYEPEVSQALGFGFRCGFLGLLHMEIVQERLEREFDQDLITTAPSVVYEVQLNGGDVIEVENPSKMPEVGKIAEIREPIVTVHLYMPQDYVGPVMTLANQKRGVQLNMAYHGRQVMLTYEMPLAEIVLDFFDKLKSVSRGYASMDYEFKEYRASDVVKVDILINGDRVDALSIIVHRAQSQYRGRAVAAKMREQIPRQMYDVAIQAAIGANIIARENIKALRKNVLAKCYGGDISRKRKLLEKQKAGKKRMKQIGSVEVPQEAFLAILQVED.

Positions 2-184 (DHIRNFSIIA…AVIARMPPPK (183 aa)) constitute a tr-type G domain. Residues 14 to 19 (DHGKST) and 131 to 134 (NKMD) contribute to the GTP site.

This sequence belongs to the TRAFAC class translation factor GTPase superfamily. Classic translation factor GTPase family. LepA subfamily.

It localises to the cell inner membrane. The catalysed reaction is GTP + H2O = GDP + phosphate + H(+). Its function is as follows. Required for accurate and efficient protein synthesis under certain stress conditions. May act as a fidelity factor of the translation reaction, by catalyzing a one-codon backward translocation of tRNAs on improperly translocated ribosomes. Back-translocation proceeds from a post-translocation (POST) complex to a pre-translocation (PRE) complex, thus giving elongation factor G a second chance to translocate the tRNAs correctly. Binds to ribosomes in a GTP-dependent manner. This Leptothrix cholodnii (strain ATCC 51168 / LMG 8142 / SP-6) (Leptothrix discophora (strain SP-6)) protein is Elongation factor 4.